The primary structure comprises 341 residues: uncharacterized protein (341 aa).

4 WD repeats span residues 19–59, 106–145, 252–293, and 303–341; these read SLGS…QVHT, GHTD…RCLG, PFSN…HHKG, and VSQS…ALTS.

It localises to the cytoplasm. The protein localises to the nucleus. This is an uncharacterized protein from Schizosaccharomyces pombe (strain 972 / ATCC 24843) (Fission yeast).